Consider the following 414-residue polypeptide: Deoxyuridine 5'-triphosphate nucleotidohydrolase (414 aa).

Substrate contacts are provided by residues 327–329 (RSS) and 409–410 (FG).

Belongs to the dUTPase family. Mg(2+) serves as cofactor.

It carries out the reaction dUTP + H2O = dUMP + diphosphate + H(+). Involved in nucleotide metabolism: produces dUMP, the immediate precursor of thymidine nucleotides and decreases the intracellular concentration of dUTP to avoid uracil incorporation into viral DNA. This Amazona oratrix (yellow-headed parrot) protein is Deoxyuridine 5'-triphosphate nucleotidohydrolase.